Here is a 712-residue protein sequence, read N- to C-terminus: Cadherin-13 (712 aa).

Positions 1–22 are cleaved as a signal peptide; the sequence is MQHKTQLTLSFLLSQVLLLACA. The propeptide occupies 23 to 138; sequence EDLECTPGFQ…GNLGIPRQKR (116 aa). An N-linked (GlcNAc...) asparagine glycan is attached at N86. Cadherin domains follow at residues 143–245, 246–363, 364–477, 478–585, and 586–680; these read TPIL…RPMF, KEGP…PPEF, TKKE…GPVF, HPNP…VPSL, and YPTL…LQVC. 5 N-linked (GlcNAc...) asparagine glycosylation sites follow: N382, N500, N530, N638, and N671. The GPI-anchor amidated aspartate moiety is linked to residue D693. The propeptide at 694 to 712 is removed in mature form; it reads ALHISMTLILLSLFSLFCL.

As to quaternary structure, by contrast to classical cadherins, homodimerization in trans is not mediated by cadherin EC1 domain strand-swapping, but instead through a homophilic adhesive interface which joins two elongated EC1-EC2 domains through a region near their Ca2+-binding sites to form a tetrahedral, X-like shape. In terms of tissue distribution, neural tissues. Also found in muscles; kidney and retina.

It localises to the cell membrane. The protein localises to the cytoplasm. Its function is as follows. Cadherins are calcium-dependent cell adhesion proteins. They preferentially interact with themselves in a homophilic manner in connecting cells; cadherins may thus contribute to the sorting of heterogeneous cell types. May act as a negative regulator of neural cell growth. This Gallus gallus (Chicken) protein is Cadherin-13 (CDH13).